The sequence spans 88 residues: UPF0250 protein SO_1163 (88 aa).

This sequence belongs to the UPF0250 family.

This is UPF0250 protein SO_1163 from Shewanella oneidensis (strain ATCC 700550 / JCM 31522 / CIP 106686 / LMG 19005 / NCIMB 14063 / MR-1).